Consider the following 424-residue polypeptide: Histidine--tRNA ligase (424 aa).

Belongs to the class-II aminoacyl-tRNA synthetase family. In terms of assembly, homodimer.

Its subcellular location is the cytoplasm. It carries out the reaction tRNA(His) + L-histidine + ATP = L-histidyl-tRNA(His) + AMP + diphosphate + H(+). In Escherichia coli O139:H28 (strain E24377A / ETEC), this protein is Histidine--tRNA ligase.